Consider the following 477-residue polypeptide: UDP-N-acetylmuramate--L-alanine ligase (477 aa).

Position 112–118 (Gly112–Thr118) interacts with ATP.

This sequence belongs to the MurCDEF family.

It is found in the cytoplasm. It carries out the reaction UDP-N-acetyl-alpha-D-muramate + L-alanine + ATP = UDP-N-acetyl-alpha-D-muramoyl-L-alanine + ADP + phosphate + H(+). Its pathway is cell wall biogenesis; peptidoglycan biosynthesis. Cell wall formation. The sequence is that of UDP-N-acetylmuramate--L-alanine ligase from Verminephrobacter eiseniae (strain EF01-2).